Here is a 465-residue protein sequence, read N- to C-terminus: 2-methylcitrate synthase, mitochondrial (465 aa).

A mitochondrion-targeting transit peptide spans 1-29 (MAMTMRSTRHASKLAQTARLALTNSRRYS). Positions 74 and 192 each coordinate CoA. Oxaloacetate is bound at residue His269. CoA is bound at residue Leu304. The active site involves His305. CoA-binding residues include Val346, Gly348, and Tyr349. Residues His351 and Arg360 each coordinate oxaloacetate. His351 is an active-site residue. CoA is bound by residues Thr400, Lys401, and Asn406. Asp408 is an active-site residue. Positions 434 and 454 each coordinate oxaloacetate.

Belongs to the citrate synthase family. As to quaternary structure, homodimer.

The protein resides in the mitochondrion matrix. The catalysed reaction is propanoyl-CoA + oxaloacetate + H2O = (2S,3S)-2-methylcitrate + CoA + H(+). It catalyses the reaction oxaloacetate + acetyl-CoA + H2O = citrate + CoA + H(+). It functions in the pathway organic acid metabolism; propanoate degradation. Component of the methylcitrate cycle that catalyzes the synthesis of (2S,3S)-2-methylcitrate from propionyl-CoA and oxaloacetate. Plays an important role in detoxification of propionyl-CoA, an inhibitor of both primary and secondary metabolism. Also has citrate synthase activity using as substrates acetyl-CoA and oxaloacetate. Plays a key role in the estabishment of invasive pulmonary aspergillosis. The sequence is that of 2-methylcitrate synthase, mitochondrial from Aspergillus fumigatus (strain CBS 144.89 / FGSC A1163 / CEA10) (Neosartorya fumigata).